Reading from the N-terminus, the 335-residue chain is Fructose-1,6-bisphosphatase class 1 1 (335 aa).

Mg(2+) contacts are provided by Glu-92, Asp-114, Leu-116, and Asp-117. Residues 117 to 120, Asn-209, and Lys-275 contribute to the substrate site; that span reads DGSS. Glu-281 is a Mg(2+) binding site.

It belongs to the FBPase class 1 family. Homotetramer. The cofactor is Mg(2+).

It localises to the cytoplasm. The catalysed reaction is beta-D-fructose 1,6-bisphosphate + H2O = beta-D-fructose 6-phosphate + phosphate. It participates in carbohydrate biosynthesis; gluconeogenesis. In Polaromonas naphthalenivorans (strain CJ2), this protein is Fructose-1,6-bisphosphatase class 1 1.